We begin with the raw amino-acid sequence, 1657 residues long: MRLNSQIVFCIVVVISCLSMIECKMGSRIYCSGSLSSVELFSQYISNYALRNDDVTIIYAGMSVDEINADVYIADCSAYDRAIPQIYMISYGLIQFPIVGQAIVIIYNVPGLSSHNMIIDRETLGRIWTGNIRKWNDIQIQNLNPDIASQLPNETITLGYNDAYYLSISEIMQLALRNFSEEFANAHTIAGGKFGNMIPAKQGYAIDAGEASESRIDWVKNTPFSLSFADFATVYPRNVSYMHMYNKAGKLVEPNITTVQSAMADFKEIYTTNDFTIDIFDASGENSWPISWVNYISMTSTFQQADCIRTKELLDFIAWFYMNNEIAEIIKEYQYYPLDNTIKKIAIDNMYNVTCNGKVSQEHQYLIAFGSPLSIMASWPNTWASSMTTVKYYASLSDQAIELQKTFSGDFGITIKDFDKNKYLSSTMEDIGVSHLAAFNIVPAYNIPEFIGLNETLVLNYETIVDIYLGLVTNWNDSSIRNSNNPYINSLLPNKTITVVVQKVESDVNELFTNFLSCKSDKFNNAIGPTNLPEFDFVSNNVVYTEDVYGVGNTLVSTDYSFAFWPEPGIRLLSHMAIVQAASIQTSTGTIIKPTNETLSKAVDNKINSINRRDIEDGSWPFIAMMSLVYHQKTMQSFSKASALADFIYWTQFDDTAASIADTQGYYVASIHPTILRENLELLQSFTFEDRTVSKVANCIFEGTICYNKGTCNNNVCLCNIDREGQFCELEKTQSDTNIVTIILAVVIPIAFIIVCIICILVVALIFSLRFRKGISDDWEIDFHELELGEQLGTGAFGEVHKGTWRGTEVAVKMISPDKTITKDIERNFKDEVRVMTTLRHPNVVLFMAASTKPPKMCIVMEFMALGSLHDLLKNELIPDIPFALKVKIAYQASKGMHFLHSSGITHRDLKSLNLLLDIKWNVKVSDFGLTKFKSDVKSINPEKFAGTIQWTAPEILSEDREVDYILSDVYSFGIIMWELITRDQPYFGMSPAAIAVSVIRDNYRPVISDQLRSEVAPEYIELLTSCWHFDPTIRPTFLEIMTRLSNLMGDSGMTGMSSSSSNSSKFDYNSFGKVQQFAINRTDPDGIVQNSYNRTDSYDLGSNNSHSSITSDTNKSNKYLRQTNIQHPTGEVVVVFTDIISAAQLWEFDASEMKNATILYNKLVRSICNECGGYESLISKERNSGEGSFCLIFSDVQNAITFCEELQKQLVGVNWSPKLLEHPITAIEKDINGTIIYAGLRVRIGLHFGSTKINYDPISRKYEYIGPTVTTAAAVTTITHGGQIIMTEDVANKLSTENSNKPVCLGRVDIDGIPDSLVLYEYVISALIGRFFGGVTRKNASFVSNETSTDYDDMDTDNSTFSARVPHQAYQYHAAIENNERYLTSAGLCSWVINYDEIKMGEQIGLGSYGVVYRGKWKNVDVAIKKFIKQKIDENHLLGIREEIAFLKKLHHPNIITMVGASLKKPNICIVTEYMAKGNLRDAMRTCTPKLEWHQKIKILVNIAKGISYLHSFDPPIIHRDIKPSNILIDENWNVKIADFGFARIKEENAIMTRCGTPCWTAPEIIRNDIYDEKVDVFSFGIVMWEVLTCKEPFIGANFMKITMDILEDVRPKIPQDCPEEFAKLMRKCWHAKSTKRPTMDDVIIVLAKFCPDISV.

A signal peptide spans 1–23 (MRLNSQIVFCIVVVISCLSMIEC). 9 N-linked (GlcNAc...) asparagine; by host glycosylation sites follow: asparagine 153, asparagine 178, asparagine 238, asparagine 255, asparagine 352, asparagine 454, asparagine 476, asparagine 494, and asparagine 596. The chain crosses the membrane as a helical span at residues 742-762 (IILAVVIPIAFIIVCIICILV). The Protein kinase 1 domain maps to 786–1049 (LELGEQLGTG…EIMTRLSNLM (264 aa)). Residues 792–800 (LGTGAFGEV) and lysine 813 contribute to the ATP site. Aspartate 909 (proton acceptor) is an active-site residue. Positions 1089 to 1115 (VQNSYNRTDSYDLGSNNSHSSITSDTN) are disordered. One can recognise a Guanylate cyclase domain in the interval 1134-1277 (VVVFTDIISA…PTVTTAAAVT (144 aa)). The Protein kinase 2 domain occupies 1399 to 1651 (IKMGEQIGLG…DDVIIVLAKF (253 aa)). ATP is bound by residues 1405 to 1413 (IGLGSYGVV) and lysine 1426. The Proton acceptor role is filled by aspartate 1522.

Its subcellular location is the membrane. The enzyme catalyses L-seryl-[protein] + ATP = O-phospho-L-seryl-[protein] + ADP + H(+). It catalyses the reaction L-threonyl-[protein] + ATP = O-phospho-L-threonyl-[protein] + ADP + H(+). The chain is Putative serine/threonine-protein kinase/receptor R826 from Acanthamoeba polyphaga mimivirus (APMV).